The primary structure comprises 96 residues: Nucleoid-associated protein CCA_00330 (96 aa).

It belongs to the YbaB/EbfC family. Homodimer.

It is found in the cytoplasm. It localises to the nucleoid. Binds to DNA and alters its conformation. May be involved in regulation of gene expression, nucleoid organization and DNA protection. This chain is Nucleoid-associated protein CCA_00330, found in Chlamydia caviae (strain ATCC VR-813 / DSM 19441 / 03DC25 / GPIC) (Chlamydophila caviae).